The sequence spans 188 residues: Xanthine phosphoribosyltransferase (188 aa).

Xanthine contacts are provided by leucine 20 and asparagine 27. Residue 127 to 131 (AHGEA) coordinates 5-phospho-alpha-D-ribose 1-diphosphate. Lysine 155 provides a ligand contact to xanthine.

It belongs to the purine/pyrimidine phosphoribosyltransferase family. Xpt subfamily. As to quaternary structure, homodimer.

The protein resides in the cytoplasm. It catalyses the reaction XMP + diphosphate = xanthine + 5-phospho-alpha-D-ribose 1-diphosphate. The protein operates within purine metabolism; XMP biosynthesis via salvage pathway; XMP from xanthine: step 1/1. Converts the preformed base xanthine, a product of nucleic acid breakdown, to xanthosine 5'-monophosphate (XMP), so it can be reused for RNA or DNA synthesis. The protein is Xanthine phosphoribosyltransferase of Heliobacterium modesticaldum (strain ATCC 51547 / Ice1).